A 190-amino-acid polypeptide reads, in one-letter code: Small ribosomal subunit protein uS4 (190 aa).

The 73-residue stretch at 106–178 (RRLQTVVFKH…GRVKRVKRNA (73 aa)) folds into the S4 RNA-binding domain. Residues 166 to 190 (GRPGRVKRVKRNAAKKGSGGGDDDE) form a disordered region. The span at 169–179 (GRVKRVKRNAA) shows a compositional bias: basic residues.

This sequence belongs to the universal ribosomal protein uS4 family.

In Trypanosoma brucei brucei, this protein is Small ribosomal subunit protein uS4.